A 394-amino-acid polypeptide reads, in one-letter code: L-lactate 2-monooxygenase (394 aa).

The region spanning 19–394 (VAPTLPMSYA…LTIDALRPTR (376 aa)) is the FMN hydroxy acid dehydrogenase domain. Tyr45 contacts a 2-oxocarboxylate. Residues 98–100 (PIG), Ser129, and Gln151 each bind FMN. Tyr153 is an a 2-oxocarboxylate binding site. Thr179 contacts FMN. Arg188 is a binding site for a 2-oxocarboxylate. Lys267 provides a ligand contact to FMN. The active-site Proton acceptor is His291. Arg294 provides a ligand contact to a 2-oxocarboxylate. FMN contacts are provided by residues 321–325 (DSGIR) and Arg345.

The protein belongs to the FMN-dependent alpha-hydroxy acid dehydrogenase family. Homotetramer. FMN serves as cofactor.

The catalysed reaction is (S)-lactate + O2 = acetate + CO2 + H2O. Its function is as follows. Catalyzes the oxidative decarboxylation of (S)-lactate (L-lactate) to acetate and carbon dioxide. Its physiological role remains unknown. This chain is L-lactate 2-monooxygenase, found in Mycolicibacterium smegmatis (Mycobacterium smegmatis).